The chain runs to 288 residues: Diaminopimelate epimerase (288 aa).

3 residues coordinate substrate: Asn13, Gln46, and Asn66. Cys75 functions as the Proton donor in the catalytic mechanism. Substrate contacts are provided by residues 76–77, Asn166, Asn199, and 217–218; these read GN and ER. The Proton acceptor role is filled by Cys226. 227-228 contributes to the substrate binding site; that stretch reads GT.

It belongs to the diaminopimelate epimerase family. In terms of assembly, homodimer.

It localises to the cytoplasm. It carries out the reaction (2S,6S)-2,6-diaminopimelate = meso-2,6-diaminopimelate. It participates in amino-acid biosynthesis; L-lysine biosynthesis via DAP pathway; DL-2,6-diaminopimelate from LL-2,6-diaminopimelate: step 1/1. Catalyzes the stereoinversion of LL-2,6-diaminopimelate (L,L-DAP) to meso-diaminopimelate (meso-DAP), a precursor of L-lysine and an essential component of the bacterial peptidoglycan. This Cupriavidus taiwanensis (strain DSM 17343 / BCRC 17206 / CCUG 44338 / CIP 107171 / LMG 19424 / R1) (Ralstonia taiwanensis (strain LMG 19424)) protein is Diaminopimelate epimerase.